Reading from the N-terminus, the 517-residue chain is MSRSESSRPLLEMRRISKTFPAVRALDNVSLTVYPGEIHSLMGENGAGKSTLMKILSGAYRADAGGEILIDGERIDVDGPLAARDAGVAVIYQELCLAPNLTVAENIYVGRELRRGNRRWGTIDRAAMARGCEDVLARLGAPFGPDTLVGTLSIAEQQLVEIARAVHTRARILVMDEPTTPLSSRETEHLFGLIRQLREEGLAIIYISHRMAEIYELSDRVSVLRDGSYVGTLERESLSAERLVAMMVGRDISGFYKKEHAPYDPGHLLLSVRDIADAERVRGCSLDLHAGEVLGIAGLVGAGRTELARLIFGAEPRTRGDVKLGDRAFGAHSPRDAIDAGLVYLTEDRKRQGLFLDMSVRDNINISVCNRDARLGALDLARGAQRARDAIASLSIRVPNANVNVGALSGGNQQKVLLSRLLETKPRVLILDEPTRGVDIGAKSEIYRIINELARAGVGVIVISSELPEIIGVADRVLVMREGEIAGELGGHTHTPITQEAIIALATGSQAELADAH.

ABC transporter domains are found at residues 11–251 (LEMR…VGRD) and 263–507 (YDPG…ALAT). Residue 43-50 (GENGAGKS) participates in ATP binding.

It belongs to the ABC transporter superfamily. Ribose importer (TC 3.A.1.2.1) family. In terms of assembly, the complex is composed of an ATP-binding protein (RbsA), two transmembrane proteins (RbsC) and a solute-binding protein (RbsB).

The protein localises to the cell inner membrane. The catalysed reaction is D-ribose(out) + ATP + H2O = D-ribose(in) + ADP + phosphate + H(+). Its function is as follows. Part of the ABC transporter complex RbsABC involved in ribose import. Responsible for energy coupling to the transport system. This Burkholderia ambifaria (strain ATCC BAA-244 / DSM 16087 / CCUG 44356 / LMG 19182 / AMMD) (Burkholderia cepacia (strain AMMD)) protein is Ribose import ATP-binding protein RbsA 1.